The sequence spans 217 residues: tRNA (guanine-N(7)-)-methyltransferase (217 aa).

Residues Glu-43, Asp-68, Asn-101, and Asn-123 each contribute to the S-adenosyl-L-methionine site. Lys-127 is a substrate binding site. The tract at residues 129–134 (RHNKRR) is interaction with RNA. Residues Asp-159 and 196–199 (TEYE) contribute to the substrate site.

The protein belongs to the class I-like SAM-binding methyltransferase superfamily. TrmB family.

It catalyses the reaction guanosine(46) in tRNA + S-adenosyl-L-methionine = N(7)-methylguanosine(46) in tRNA + S-adenosyl-L-homocysteine. It functions in the pathway tRNA modification; N(7)-methylguanine-tRNA biosynthesis. Functionally, catalyzes the formation of N(7)-methylguanine at position 46 (m7G46) in tRNA. This chain is tRNA (guanine-N(7)-)-methyltransferase, found in Clostridium botulinum (strain Langeland / NCTC 10281 / Type F).